The following is a 130-amino-acid chain: Splicing regulatory small protein (130 aa).

Over residues Met-1–Ala-10 the composition is skewed to basic residues. Disordered regions lie at residues Met-1–Gly-29 and Gly-74–Arg-130. Residues Gly-16 to Pro-22 form a mediates interaction with SRSF3 region. Positions Leu-77 to Val-98 are enriched in basic and acidic residues. The span at Ser-120–Arg-130 shows a compositional bias: polar residues.

In terms of assembly, interacts with SRSF3; increases SRSF3 binding to specific exons.

It is found in the nucleus. Functionally, interacts with the splicing factor SRSF3 and increases its binding to specific exons within pre-mRNA, thereby regulating exon-inclusion during alternative splicing. Does not directly bind pre-mRNA and could regulate a wider range of splicing factors through a similar mechanism. This chain is Splicing regulatory small protein, found in Homo sapiens (Human).